Reading from the N-terminus, the 79-residue chain is Small ribosomal subunit protein uS17 (79 aa).

It belongs to the universal ribosomal protein uS17 family. Part of the 30S ribosomal subunit.

Its function is as follows. One of the primary rRNA binding proteins, it binds specifically to the 5'-end of 16S ribosomal RNA. This is Small ribosomal subunit protein uS17 from Rhodospirillum rubrum (strain ATCC 11170 / ATH 1.1.1 / DSM 467 / LMG 4362 / NCIMB 8255 / S1).